The chain runs to 155 residues: 2-C-methyl-D-erythritol 2,4-cyclodiphosphate synthase (155 aa).

The a divalent metal cation site is built by Asp9 and His11. 4-CDP-2-C-methyl-D-erythritol 2-phosphate contacts are provided by residues 9 to 11 (DSH) and 35 to 36 (HS). Residue His43 coordinates a divalent metal cation. Position 57–59 (57–59 (DIG)) interacts with 4-CDP-2-C-methyl-D-erythritol 2-phosphate.

The protein belongs to the IspF family. Homotrimer. A divalent metal cation serves as cofactor.

It catalyses the reaction 4-CDP-2-C-methyl-D-erythritol 2-phosphate = 2-C-methyl-D-erythritol 2,4-cyclic diphosphate + CMP. The protein operates within isoprenoid biosynthesis; isopentenyl diphosphate biosynthesis via DXP pathway; isopentenyl diphosphate from 1-deoxy-D-xylulose 5-phosphate: step 4/6. In terms of biological role, involved in the biosynthesis of isopentenyl diphosphate (IPP) and dimethylallyl diphosphate (DMAPP), two major building blocks of isoprenoid compounds. Catalyzes the conversion of 4-diphosphocytidyl-2-C-methyl-D-erythritol 2-phosphate (CDP-ME2P) to 2-C-methyl-D-erythritol 2,4-cyclodiphosphate (ME-CPP) with a corresponding release of cytidine 5-monophosphate (CMP). The sequence is that of 2-C-methyl-D-erythritol 2,4-cyclodiphosphate synthase from Koribacter versatilis (strain Ellin345).